The sequence spans 122 residues: Nodulation protein NolR (122 aa).

Residues 15–109 (EKHEDAEIAA…ALSDIYGDDT (95 aa)) enclose the HTH arsR-type domain. A DNA-binding region (H-T-H motif) is located at residues 49–68 (VGALAHKVGLSQSALSQHLS).

Binds to the operator site in homodimeric form.

Functionally, negative transacting factor controlling the nod regulon. May control the expression of nodD1, nodD2, nodD3 and nodABC genes. This chain is Nodulation protein NolR (nolR), found in Rhizobium meliloti (Ensifer meliloti).